A 442-amino-acid chain; its full sequence is Proline--tRNA ligase (442 aa).

Belongs to the class-II aminoacyl-tRNA synthetase family. ProS type 2 subfamily. Homodimer.

The protein localises to the cytoplasm. It catalyses the reaction tRNA(Pro) + L-proline + ATP = L-prolyl-tRNA(Pro) + AMP + diphosphate. Its function is as follows. Catalyzes the attachment of proline to tRNA(Pro) in a two-step reaction: proline is first activated by ATP to form Pro-AMP and then transferred to the acceptor end of tRNA(Pro). The protein is Proline--tRNA ligase of Chelativorans sp. (strain BNC1).